A 1179-amino-acid chain; its full sequence is Dynein axonemal assembly factor 9 (1179 aa).

Interacts with ARL3.

In terms of biological role, may act as an effector for ARL3. This chain is Dynein axonemal assembly factor 9, found in Mus musculus (Mouse).